We begin with the raw amino-acid sequence, 323 residues long: MDSKHQCVKLNDGHFMPVLGFGTYAPPEVPRSKALEVTKLAIEAGFRHIDSAHLYNNEEQVGLAIRSKIADGSVKREDIFYTSKLWSTFHRPELVRPALENSLKKAQLDYVDLYLIHSPMSLKPGEELSPTDENGKVIFDIVDLCTTWEAMEECKDAGLAKSIGVSNFNRRQLEMILNKPGLKYKPVCNQVECHPYFNRSKLLDFCKSKDIVLVAYSALGSQRDKRWVDPNSPVLLEDPVLCALAKKHKRTPALIALRYQLQRGVVVLAKSYNEQRIRENVQVFEFQLTAEDMRAIDGLNRNLHYFNSDSLASHPNYPYSDEY.

NADP(+) contacts are provided by residues 20–24 and Asp50; that span reads GFGTY. The active-site Proton donor is Tyr55. His117 serves as a coordination point for substrate. NADP(+) contacts are provided by residues 166 to 167, Gln190, 216 to 221, and 270 to 280; these read SN, YSALGS, and KSYNEQRIREN.

This sequence belongs to the aldo/keto reductase family.

It is found in the cytoplasm. The enzyme catalyses a 3alpha-hydroxysteroid + NADP(+) = a 3-oxosteroid + NADPH + H(+). It carries out the reaction a 3alpha-hydroxysteroid + NAD(+) = a 3-oxosteroid + NADH + H(+). It catalyses the reaction prostaglandin F2alpha + NADP(+) = prostaglandin D2 + NADPH + H(+). The catalysed reaction is testosterone + NAD(+) = androst-4-ene-3,17-dione + NADH + H(+). The enzyme catalyses testosterone + NADP(+) = androst-4-ene-3,17-dione + NADPH + H(+). It carries out the reaction prostaglandin F2alpha + NADP(+) = prostaglandin H2 + NADPH + H(+). It catalyses the reaction prostaglandin D2 + NADPH + H(+) = 11beta-prostaglandin F2 + NADP(+). The catalysed reaction is prostaglandin D2-ethanolamide + NADPH + H(+) = 11beta-prostaglandin F2-ethanolamide + NADP(+). The enzyme catalyses 17beta-estradiol + NADP(+) = estrone + NADPH + H(+). It carries out the reaction 17beta-estradiol + NAD(+) = estrone + NADH + H(+). It catalyses the reaction (20S)-hydroxypregn-4-en-3-one + NADP(+) = progesterone + NADPH + H(+). The catalysed reaction is (20S)-hydroxypregn-4-en-3-one + NAD(+) = progesterone + NADH + H(+). The enzyme catalyses 5alpha-androstane-3alpha,17beta-diol + NADP(+) = 17beta-hydroxy-5alpha-androstan-3-one + NADPH + H(+). It carries out the reaction 5alpha-androstane-3alpha,17beta-diol + NAD(+) = 17beta-hydroxy-5alpha-androstan-3-one + NADH + H(+). It catalyses the reaction androsterone + NADPH + H(+) = 5alpha-androstane-3alpha,17beta-diol + NADP(+). The catalysed reaction is 5alpha-androstane-3alpha,17beta-diol + NAD(+) = androsterone + NADH + H(+). The enzyme catalyses 5alpha-androstane-3beta,17beta-diol + NADP(+) = 17beta-hydroxy-5alpha-androstan-3-one + NADPH + H(+). It carries out the reaction 9-cis-retinol + NADP(+) = 9-cis-retinal + NADPH + H(+). It participates in steroid metabolism. Its function is as follows. Cytosolic aldo-keto reductase that catalyzes the NADH and NADPH-dependent reduction of ketosteroids to hydroxysteroids. Acts as a NAD(P)(H)-dependent 3-, 17- and 20-ketosteroid reductase on the steroid nucleus and side chain and regulates the metabolism of androgens, estrogens and progesterone. Displays the ability to catalyze both oxidation and reduction in vitro, but most probably acts as a reductase in vivo since the oxidase activity measured in vitro is inhibited by physiological concentration of NADPH. Acts preferentially as a 17-ketosteroid reductase and has the highest catalytic efficiency of the AKR1C enzyme for the reduction of delta4-androstenedione to form testosterone. Reduces prostaglandin (PG) D2 to 11beta-prostaglandin F2, progesterone to 20alpha-hydroxyprogesterone and estrone to 17beta-estradiol. Catalyzes the transformation of the potent androgen dihydrotestosterone (DHT) into the less active form, 5-alpha-androstan-3-alpha,17-beta-diol (3-alpha-diol). Also displays retinaldehyde reductase activity toward 9-cis-retinal. The sequence is that of Aldo-keto reductase family 1 member C3 (AKR1C3) from Pongo abelii (Sumatran orangutan).